We begin with the raw amino-acid sequence, 253 residues long: Ubiquinone/menaquinone biosynthesis C-methyltransferase UbiE (253 aa).

S-adenosyl-L-methionine-binding positions include T76, D97, and 125-126 (NA).

The protein belongs to the class I-like SAM-binding methyltransferase superfamily. MenG/UbiE family.

It carries out the reaction a 2-demethylmenaquinol + S-adenosyl-L-methionine = a menaquinol + S-adenosyl-L-homocysteine + H(+). The catalysed reaction is a 2-methoxy-6-(all-trans-polyprenyl)benzene-1,4-diol + S-adenosyl-L-methionine = a 5-methoxy-2-methyl-3-(all-trans-polyprenyl)benzene-1,4-diol + S-adenosyl-L-homocysteine + H(+). The protein operates within quinol/quinone metabolism; menaquinone biosynthesis; menaquinol from 1,4-dihydroxy-2-naphthoate: step 2/2. It functions in the pathway cofactor biosynthesis; ubiquinone biosynthesis. Methyltransferase required for the conversion of demethylmenaquinol (DMKH2) to menaquinol (MKH2) and the conversion of 2-polyprenyl-6-methoxy-1,4-benzoquinol (DDMQH2) to 2-polyprenyl-3-methyl-6-methoxy-1,4-benzoquinol (DMQH2). The polypeptide is Ubiquinone/menaquinone biosynthesis C-methyltransferase UbiE (Rhodopseudomonas palustris (strain ATCC BAA-98 / CGA009)).